The chain runs to 185 residues: Ribosome-recycling factor (185 aa).

Belongs to the RRF family.

The protein resides in the cytoplasm. Functionally, responsible for the release of ribosomes from messenger RNA at the termination of protein biosynthesis. May increase the efficiency of translation by recycling ribosomes from one round of translation to another. The chain is Ribosome-recycling factor from Alteromonas mediterranea (strain DSM 17117 / CIP 110805 / LMG 28347 / Deep ecotype).